The primary structure comprises 323 residues: Chitin-binding lectin 1 (323 aa).

The first 22 residues, 1–22 (MKETAISVLALLTLFLLEVVSA), serve as a signal peptide directing secretion. A 4-hydroxyproline mark is found at Pro-50, Pro-51, Pro-53, and Pro-55. 4 O-linked (Ara...) hydroxyproline glycosylation sites follow: Pro-50, Pro-51, Pro-53, and Pro-55. 2 Chitin-binding type-1 domains span residues 58–101 (YPQC…QCPG) and 105–149 (EGRC…QCKL). Intrachain disulfides connect Cys-61/Cys-77, Cys-70/Cys-83, Cys-76/Cys-90, Cys-95/Cys-99, Cys-108/Cys-125, Cys-117/Cys-131, Cys-124/Cys-138, and Cys-143/Cys-147. Chitin is bound by residues Ser-78, Trp-80, Trp-82, and Tyr-89. The tract at residues 150-210 (PSPPPPPPPP…PPPPPPALPY (61 aa)) is extensin-like. Residue Ser-151 is glycosylated (O-linked (Gal) serine). Repeat copies occupy residues 151–159 (SPPPPPPPP), 160–164 (SPPPP), 165–167 (SPP), 168–172 (SPPPP), 173–180 (SPPPPPPP), 181–185 (SPPPP), 186–190 (SPPPP), 191–192 (SP), 193–198 (SPPPPP), and 200–206 (SPPPPPP). Positions 151-206 (SPPPPPPPPSPPPPSPPSPPPPSPPPPPPPSPPPPSPPPPSPSPPPPPASPPPPPP) are 10 X approximate repeats of S-P-P-P-P. Pro-152, Pro-153, Pro-154, Pro-155, Pro-156, Pro-157, Pro-158, and Pro-159 each carry 4-hydroxyproline. O-linked (Ara...) hydroxyproline glycans are attached at residues Pro-152, Pro-153, Pro-154, Pro-155, Pro-156, Pro-157, Pro-158, and Pro-159. A disordered region spans residues 154-203 (PPPPPPSPPPPSPPSPPPPSPPPPPPPSPPPPSPPPPSPSPPPPPASPPP). Residue Ser-160 is glycosylated (O-linked (Gal) serine). 4-hydroxyproline occurs at positions 161, 162, 163, and 164. O-linked (Ara...) hydroxyproline glycans are attached at residues Pro-161, Pro-162, Pro-163, and Pro-164. Residue Ser-165 is glycosylated (O-linked (Gal) serine). 4-hydroxyproline occurs at positions 166 and 167. Residues Pro-166 and Pro-167 are each glycosylated (O-linked (Ara...) hydroxyproline). The O-linked (Gal) serine glycan is linked to Ser-168. Pro-169, Pro-170, Pro-171, and Pro-172 each carry 4-hydroxyproline. 4 O-linked (Ara...) hydroxyproline glycosylation sites follow: Pro-169, Pro-170, Pro-171, and Pro-172. O-linked (Gal) serine glycosylation occurs at Ser-173. 7 positions are modified to 4-hydroxyproline: Pro-174, Pro-175, Pro-176, Pro-177, Pro-178, Pro-179, and Pro-180. Pro-174, Pro-175, Pro-176, Pro-177, Pro-178, Pro-179, and Pro-180 each carry an O-linked (Ara...) hydroxyproline glycan. Ser-181 carries O-linked (Gal) serine glycosylation. 4 positions are modified to 4-hydroxyproline: Pro-182, Pro-183, Pro-184, and Pro-185. Residues Pro-182, Pro-183, Pro-184, and Pro-185 are each glycosylated (O-linked (Ara...) hydroxyproline). O-linked (Gal) serine glycosylation is present at Ser-186. 4-hydroxyproline occurs at positions 187, 188, 189, and 190. Residues Pro-187, Pro-188, Pro-189, and Pro-190 are each glycosylated (O-linked (Ara...) hydroxyproline). O-linked (Gal) serine glycosylation is present at Ser-191. Pro-192 is modified (4-hydroxyproline). The O-linked (Ara...) hydroxyproline glycan is linked to Pro-192. Ser-193 carries an O-linked (Gal) serine glycan. 4-hydroxyproline is present on residues Pro-194, Pro-195, Pro-196, Pro-197, and Pro-198. Residues Pro-194, Pro-195, Pro-196, Pro-197, and Pro-198 are each glycosylated (O-linked (Ara...) hydroxyproline). The O-linked (Gal) serine glycan is linked to Ser-200. A 4-hydroxyproline mark is found at Pro-201, Pro-202, Pro-203, Pro-204, Pro-205, Pro-206, and Pro-209. O-linked (Ara...) hydroxyproline glycans are attached at residues Pro-201, Pro-202, Pro-203, Pro-204, Pro-205, Pro-206, and Pro-209. Chitin-binding type-1 domains lie at 210-253 (YPQC…QCPG) and 257-301 (EGRC…QCNT). Disulfide bonds link Cys-213–Cys-229, Cys-222–Cys-235, Cys-228–Cys-242, Cys-247–Cys-251, Cys-260–Cys-277, Cys-269–Cys-283, Cys-276–Cys-290, and Cys-295–Cys-299. Positions 230, 232, 234, and 241 each coordinate chitin.

The protein in the central section; belongs to the extensin family. As to quaternary structure, homodimer. In terms of processing, heavily glycosylated with beta-arabinose on hydroxyprolines and with alpha-galactose on serines of the extensin-like domain. As no other sugars could be detected in the native lectin, it is unlikely that the three putative N-glycosylation sites are actually glycosylated. The N-terminus is blocked. The N-terminal sequences proposed in PubMed:9022287 and PubMed:11056399 originate probably from truncated proteins.

Functionally, this protein might function as a defense against chitin containing pathogens. Binds to several branched or linear N-acetyllactosamine-containing glycosphingolipids and also to lactosylceramide with sphingosine and non-hydroxy fatty acids. The sequence is that of Chitin-binding lectin 1 from Solanum tuberosum (Potato).